Reading from the N-terminus, the 161-residue chain is MKYDTSELCDIYQEDVNVVEPLFTNFGGRTSFGGQITTVKCFEDNGLLYDLLQENGHGRVLLVDGGGSVRRALIDAELGNLAVQNEWEGIVVYGAVRQVDDLEELDLGIQAMAATPAGAASEGIGESDTRVNFGGVTFFSGDHLYADNTGVILSKDALDLE.

The protein belongs to the RraA family. As to quaternary structure, homotrimer. Binds to both RNA-binding sites in the C-terminal region of Rne and to RhlB.

Its subcellular location is the cytoplasm. Globally modulates RNA abundance by binding to RNase E (Rne) and regulating its endonucleolytic activity. Can modulate Rne action in a substrate-dependent manner by altering the composition of the degradosome. Modulates RNA-binding and helicase activities of the degradosome. The sequence is that of Regulator of ribonuclease activity A from Sodalis glossinidius (strain morsitans).